Reading from the N-terminus, the 126-residue chain is Methylglyoxal synthase (126 aa).

The MGS-like domain occupies 1 to 126 (MKALALIAHD…IAWIRKGTPQ (126 aa)). Residues His9, Lys13, 35–38 (TGTT), and 55–56 (SG) contribute to the substrate site. Asp61 functions as the Proton donor/acceptor in the catalytic mechanism. His88 is a substrate binding site.

Belongs to the methylglyoxal synthase family.

The catalysed reaction is dihydroxyacetone phosphate = methylglyoxal + phosphate. Its function is as follows. Catalyzes the formation of methylglyoxal from dihydroxyacetone phosphate. In Thermus thermophilus (strain ATCC BAA-163 / DSM 7039 / HB27), this protein is Methylglyoxal synthase.